A 535-amino-acid chain; its full sequence is Ribonuclease Y (535 aa).

A helical transmembrane segment spans residues 4-24 (IILLIVSALIGLILGYALISI). A disordered region spans residues 118–141 (ENLSSKEKVLDSKEQSLTDKSKHI). The KH domain maps to 225 to 285 (TITSVHLPDD…IRREIARMTL (61 aa)). Positions 351–444 (VLRHSVEVGK…VAAADALSSA (94 aa)) constitute an HD domain.

This sequence belongs to the RNase Y family.

The protein resides in the cell membrane. Functionally, endoribonuclease that initiates mRNA decay. The sequence is that of Ribonuclease Y from Streptococcus pyogenes serotype M18 (strain MGAS8232).